A 197-amino-acid polypeptide reads, in one-letter code: MEVKKVLVIDNIDSFVWNLVQYVGTLGYKVKLVDNKITLDEIKKINPDRIIISPGPKTPKEAGNCIKIIQEVDIPILGVCLGHQCIVEAFGGEVGRAKRVMHGKASLINHDGEGIFKDIPNPFYGGRYHSLIAKEVPKELKITAKSLDDNYIMGVRHKKLPIEGVQFHPESILTESDNLKFPDLGLKLIKNFVESEY.

Residues 5–197 enclose the Glutamine amidotransferase type-1 domain; it reads KVLVIDNIDS…LIKNFVESEY (193 aa). 55 to 57 is a binding site for L-glutamine; that stretch reads GPK. Cys80 acts as the Nucleophile; for GATase activity in catalysis. Residues Gln84 and 130-131 each bind L-glutamine; that span reads SL. Residues His168 and Glu170 each act as for GATase activity in the active site.

Heterotetramer consisting of two non-identical subunits: a beta subunit (TrpG) and a large alpha subunit (TrpE).

The catalysed reaction is chorismate + L-glutamine = anthranilate + pyruvate + L-glutamate + H(+). Its pathway is amino-acid biosynthesis; L-tryptophan biosynthesis; L-tryptophan from chorismate: step 1/5. Functionally, part of a heterotetrameric complex that catalyzes the two-step biosynthesis of anthranilate, an intermediate in the biosynthesis of L-tryptophan. In the first step, the glutamine-binding beta subunit (TrpG) of anthranilate synthase (AS) provides the glutamine amidotransferase activity which generates ammonia as a substrate that, along with chorismate, is used in the second step, catalyzed by the large alpha subunit of AS (TrpE) to produce anthranilate. In the absence of TrpG, TrpE can synthesize anthranilate directly from chorismate and high concentrations of ammonia. The sequence is that of Anthranilate synthase component 2 (trpG) from Methanocaldococcus jannaschii (strain ATCC 43067 / DSM 2661 / JAL-1 / JCM 10045 / NBRC 100440) (Methanococcus jannaschii).